We begin with the raw amino-acid sequence, 573 residues long: Arylsulfatase I (573 aa).

The N-terminal stretch at 1-23 (MHALSGFSLVSLLSLGYLSWDWA) is a signal peptide. Ca(2+) is bound by residues Asp-55, Asp-56, and Cys-93. Cys-93 serves as the catalytic Nucleophile. At Cys-93 the chain carries 3-oxoalanine (Cys). Position 147 (Lys-147) interacts with substrate. His-149 is a catalytic residue. Residue His-239 participates in substrate binding. N-linked (GlcNAc...) asparagine glycosylation is found at Asn-276 and Asn-288. Ca(2+)-binding residues include Asp-297 and Asn-298. Lys-315 serves as a coordination point for substrate. Residues Asn-466 and Asn-496 are each glycosylated (N-linked (GlcNAc...) asparagine). The tract at residues 506–550 (AANPRAHPDFNGGAWGPWASDEDEEEEDEEEEGRARSFPRGRRKK) is disordered. Over residues 525–537 (SDEDEEEEDEEEE) the composition is skewed to acidic residues.

This sequence belongs to the sulfatase family. Ca(2+) is required as a cofactor. In terms of processing, the oxidation of Cys-93 residue to 3-oxoalanine (also known as C(alpha)-formylglycine) by SUMF1/Sulfatase-modifying factor 1, seems critical for catalytic activity.

Its subcellular location is the secreted. The protein resides in the endoplasmic reticulum. Displays arylsulfatase activity at neutral pH, when co-expressed with SUMF1; arylsulfatase activity is measured in the secretion medium of retinal cell line, but no activity is recorded when measured in cell extracts. The polypeptide is Arylsulfatase I (Arsi) (Rattus norvegicus (Rat)).